Consider the following 802-residue polypeptide: Ribosomal protein S6 kinase alpha-5 (802 aa).

The span at 1-22 shows a compositional bias: gly residues; the sequence is MEEEGGSSGGAAGTSADGGDGG. Residues 1–23 form a disordered region; sequence MEEEGGSSGGAAGTSADGGDGGE. The Protein kinase 1 domain maps to 49–318; sequence FELLKVLGTG…ADEIKEHLFF (270 aa). ATP-binding positions include 55-63 and lysine 81; that span reads LGTGAYGKV. Aspartate 177 functions as the Proton acceptor in the catalytic mechanism. The residue at position 212 (serine 212) is a Phosphoserine; by autocatalysis. An AGC-kinase C-terminal domain is found at 319-387; the sequence is QKINWDDLAA…VAPSILFKRN (69 aa). Serine 360 is modified (phosphoserine; by MAPK1, MAPK3 and MAPK14). 2 positions are modified to phosphoserine; by autocatalysis: serine 376 and serine 381. In terms of domain architecture, Protein kinase 2 spans 426–687; that stretch reads DLKDKPLGEG…MSGLRYNEWL (262 aa). Residues 432–440 and lysine 455 contribute to the ATP site; that span reads LGEGSFSIC. Aspartate 544 (proton acceptor) is an active-site residue. At threonine 581 the chain carries Phosphothreonine; by MAPK1, MAPK3 and MAPK14. Serine 647, serine 657, serine 691, and serine 695 each carry phosphoserine. A Phosphothreonine; by MAPK1, MAPK3 and MAPK14 modification is found at threonine 700. The interval 741-802 is disordered; it reads AKRRKMKKTS…TLFQFSDSVA (62 aa). The segment covering 749-779 has biased composition (low complexity); that stretch reads TSTSTETRSSSSESSHSSSSHSHGKTTPTKT. Serine 750, serine 752, and serine 758 each carry phosphoserine; by autocatalysis. Positions 780–802 are enriched in polar residues; that stretch reads LQPSNPADSNNPETLFQFSDSVA. Position 798 is a phosphoserine (serine 798).

This sequence belongs to the protein kinase superfamily. AGC Ser/Thr protein kinase family. S6 kinase subfamily. As to quaternary structure, forms a complex with either MAPK1/ERK2 or MAPK3/ERK1 in quiescent cells which transiently dissociates following mitogenic stimulation. Also associates with MAPK14/p38-alpha. Activated RPS6KA5 associates with and phosphorylates the NF-kappa-B p65 subunit RELA. Interacts with CREBBP and EP300. Mg(2+) serves as cofactor. Ser-376 and Thr-581 phosphorylation is required for kinase activity. Ser-376 and Ser-212 are autophosphorylated by the C-terminal kinase domain, and their phosphorylation is essential for the catalytic activity of the N-terminal kinase domain. Phosphorylated at Ser-360, Thr-581 and Thr-700 by MAPK1/ERK2, MAPK3/ERK1 and MAPK14/p38-alpha. Autophosphorylated at Ser-750, Ser-752 and Ser-758 by the N-terminal kinase domain. In terms of processing, ubiquitinated.

The protein resides in the nucleus. The catalysed reaction is L-seryl-[protein] + ATP = O-phospho-L-seryl-[protein] + ADP + H(+). It carries out the reaction L-threonyl-[protein] + ATP = O-phospho-L-threonyl-[protein] + ADP + H(+). Its activity is regulated as follows. Activated by phosphorylation at Ser-360, Thr-581 and Thr-700 by MAPK1/ERK2, MAPK3/ERK1 and MAPK14/p38-alpha, and by further autophosphorylation of Ser-212, Ser-376 and Ser-381 by the activated C-terminal kinase domain. The active N-terminal kinase domain finally phosphorylates downstream substrates, as well as Ser-750, Ser-752 and Ser-758 in its own C-terminal region. Serine/threonine-protein kinase that is required for the mitogen or stress-induced phosphorylation of the transcription factors CREB1 and ATF1 and for the regulation of the transcription factors RELA, STAT3 and ETV1/ER81, and that contributes to gene activation by histone phosphorylation and functions in the regulation of inflammatory genes. Phosphorylates CREB1 and ATF1 in response to mitogenic or stress stimuli such as UV-C irradiation, epidermal growth factor (EGF) and anisomycin. Plays an essential role in the control of RELA transcriptional activity in response to TNF and upon glucocorticoid, associates in the cytoplasm with the glucocorticoid receptor NR3C1 and contributes to RELA inhibition and repression of inflammatory gene expression. In skeletal myoblasts is required for phosphorylation of RELA at 'Ser-276' during oxidative stress. In erythropoietin-stimulated cells, is necessary for the 'Ser-727' phosphorylation of STAT3 and regulation of its transcriptional potential. Phosphorylates ETV1/ER81 at 'Ser-191' and 'Ser-216', and thereby regulates its ability to stimulate transcription, which may be important during development and breast tumor formation. Directly represses transcription via phosphorylation of 'Ser-1' of histone H2A. Phosphorylates 'Ser-10' of histone H3 in response to mitogenics, stress stimuli and EGF, which results in the transcriptional activation of several immediate early genes, including proto-oncogenes c-fos/FOS and c-jun/JUN. May also phosphorylate 'Ser-28' of histone H3. Mediates the mitogen- and stress-induced phosphorylation of high mobility group protein 1 (HMGN1/HMG14). In lipopolysaccharide-stimulated primary macrophages, acts downstream of the Toll-like receptor TLR4 to limit the production of pro-inflammatory cytokines. Functions probably by inducing transcription of the MAP kinase phosphatase DUSP1 and the anti-inflammatory cytokine interleukin 10 (IL10), via CREB1 and ATF1 transcription factors. Plays a role in neuronal cell death by mediating the downstream effects of excitotoxic injury. Phosphorylates TRIM7 at 'Ser-107' in response to growth factor signaling via the MEK/ERK pathway, thereby stimulating its ubiquitin ligase activity. The protein is Ribosomal protein S6 kinase alpha-5 (RPS6KA5) of Pongo abelii (Sumatran orangutan).